The primary structure comprises 565 residues: Glucose starvation modulator protein 1 (565 aa).

The zn(2)-C6 fungal-type DNA-binding region spans 20-48 (CVFCHQKHLQCSNERPCKNCVKRNIAHGC). Disordered stretches follow at residues 63-106 (GVSG…ESSN) and 250-269 (QVSP…NTLS). Positions 82–93 (SPLSTSMSPTDS) are enriched in polar residues. Residues 252 to 269 (SPSPSNTSTSENNTNTLS) show a composition bias toward low complexity.

Belongs to the ERT1/acuK family.

It localises to the nucleus. Functionally, transcription factor which regulates nonfermentable carbon utilization. This is Glucose starvation modulator protein 1 (GSM1) from Candida dubliniensis (strain CD36 / ATCC MYA-646 / CBS 7987 / NCPF 3949 / NRRL Y-17841) (Yeast).